Here is a 511-residue protein sequence, read N- to C-terminus: Bifunctional purine biosynthesis protein PurH (511 aa).

The MGS-like domain occupies 1–145 (MKKRALVSVS…KNHKFVSVIV (145 aa)).

The protein belongs to the PurH family.

It carries out the reaction (6R)-10-formyltetrahydrofolate + 5-amino-1-(5-phospho-beta-D-ribosyl)imidazole-4-carboxamide = 5-formamido-1-(5-phospho-D-ribosyl)imidazole-4-carboxamide + (6S)-5,6,7,8-tetrahydrofolate. The catalysed reaction is IMP + H2O = 5-formamido-1-(5-phospho-D-ribosyl)imidazole-4-carboxamide. Its pathway is purine metabolism; IMP biosynthesis via de novo pathway; 5-formamido-1-(5-phospho-D-ribosyl)imidazole-4-carboxamide from 5-amino-1-(5-phospho-D-ribosyl)imidazole-4-carboxamide (10-formyl THF route): step 1/1. It functions in the pathway purine metabolism; IMP biosynthesis via de novo pathway; IMP from 5-formamido-1-(5-phospho-D-ribosyl)imidazole-4-carboxamide: step 1/1. This Bacillus anthracis (strain A0248) protein is Bifunctional purine biosynthesis protein PurH.